The sequence spans 160 residues: MSTLKKPDLSDPALRAKLAKGMGHNYYGEPAWPNDLLYVFPVVIFGTIGLCTGLAIMDPTMIGEPADPFATPLEILPEWYLYPVFQILRILPNKLLGIACMAGVPLGLMLVPFIESVNKFQNPFRRPVATAIFLFGTVVTIWLGIGATFPIDISLTLGLF.

3 helical membrane passes run 36 to 56, 95 to 115, and 131 to 151; these read LLYV…GLAI, LLGI…PFIE, and AIFL…TFPI.

It belongs to the cytochrome b family. PetD subfamily. In terms of assembly, the 4 large subunits of the cytochrome b6-f complex are cytochrome b6, subunit IV (17 kDa polypeptide, PetD), cytochrome f and the Rieske protein, while the 4 small subunits are PetG, PetL, PetM and PetN. The complex functions as a dimer.

It localises to the cellular thylakoid membrane. Its function is as follows. Component of the cytochrome b6-f complex, which mediates electron transfer between photosystem II (PSII) and photosystem I (PSI), cyclic electron flow around PSI, and state transitions. The sequence is that of Cytochrome b6-f complex subunit 4 from Microcystis aeruginosa (strain NIES-843 / IAM M-2473).